We begin with the raw amino-acid sequence, 124 residues long: Ribonuclease pancreatic (124 aa).

The span at 1 to 13 (KESAAAKFERQHI) shows a compositional bias: basic and acidic residues. Residues 1–23 (KESAAAKFERQHIDSSTSSVSSS) are disordered. Substrate is bound by residues Lys7 and Arg10. The active-site Proton acceptor is His12. 4 disulfides stabilise this stretch: Cys26–Cys84, Cys40–Cys95, Cys58–Cys110, and Cys65–Cys72. The N-linked (GlcNAc...) asparagine glycan is linked to Asn34. Residues 41-45 (KPVNT), Lys66, and Arg85 contribute to the substrate site. His119 acts as the Proton donor in catalysis.

The protein belongs to the pancreatic ribonuclease family. Monomer. Interacts with and forms tight 1:1 complexes with RNH1. Dimerization of two such complexes may occur. Interaction with RNH1 inhibits this protein. As to expression, pancreas.

The protein resides in the secreted. It catalyses the reaction an [RNA] containing cytidine + H2O = an [RNA]-3'-cytidine-3'-phosphate + a 5'-hydroxy-ribonucleotide-3'-[RNA].. It carries out the reaction an [RNA] containing uridine + H2O = an [RNA]-3'-uridine-3'-phosphate + a 5'-hydroxy-ribonucleotide-3'-[RNA].. Functionally, endonuclease that catalyzes the cleavage of RNA on the 3' side of pyrimidine nucleotides. Acts on single-stranded and double-stranded RNA. The protein is Ribonuclease pancreatic (RNASE1) of Giraffa camelopardalis (Giraffe).